Here is a 274-residue protein sequence, read N- to C-terminus: tRNA (guanine-N(1)-)-methyltransferase (274 aa).

S-adenosyl-L-methionine contacts are provided by residues Gly-116 and 140–145; that span reads LGDYVL.

Belongs to the RNA methyltransferase TrmD family. Homodimer.

It is found in the cytoplasm. The enzyme catalyses guanosine(37) in tRNA + S-adenosyl-L-methionine = N(1)-methylguanosine(37) in tRNA + S-adenosyl-L-homocysteine + H(+). Specifically methylates guanosine-37 in various tRNAs. This is tRNA (guanine-N(1)-)-methyltransferase from Arthrobacter sp. (strain FB24).